A 314-amino-acid polypeptide reads, in one-letter code: tRNA pseudouridine synthase B (314 aa).

Residue H43 participates in substrate binding. D48 serves as the catalytic Nucleophile. Substrate-binding residues include Y76, Y179, and L200.

It belongs to the pseudouridine synthase TruB family. Type 1 subfamily.

It catalyses the reaction uridine(55) in tRNA = pseudouridine(55) in tRNA. In terms of biological role, responsible for synthesis of pseudouridine from uracil-55 in the psi GC loop of transfer RNAs. This is tRNA pseudouridine synthase B from Serratia proteamaculans (strain 568).